We begin with the raw amino-acid sequence, 306 residues long: Putative lipid kinase Sca_1050 (306 aa).

Positions 3-139 (QHFHRGILFY…FDVLKVNDTY (137 aa)) constitute a DAGKc domain. Residues S44, 74–80 (GDGTVNE), and T101 each bind ATP. Mg(2+) contacts are provided by S220, D223, and E225. The Proton acceptor role is filled by E281.

This sequence belongs to the diacylglycerol/lipid kinase family. The cofactor is Mg(2+).

Its function is as follows. May catalyze the ATP-dependent phosphorylation of lipids other than diacylglycerol (DAG). This chain is Putative lipid kinase Sca_1050, found in Staphylococcus carnosus (strain TM300).